Here is a 908-residue protein sequence, read N- to C-terminus: MAKNNHISASGNSTSGDHRLKEEVLTPTTSASTPHRIFSVDDDPKEIQNDIRYLEGLHEGLKFALHANKSKRSVSSQSPIVHSSNNTLHHHEHQQHLPPTLESLSSKSHSVPDLNTATPSSPKRMHSSIRELPHDDNDDEDANDDSRFIIHDSHGHDLLIDEINCQSPSHLENNDQASNASSTESFTLRERQDAINETHPFGIRIWKPALYKKHRSVQRTAAQDIHETQLKTITWEVTCSNVLWFILFGFPIAILFYSAAIVVFLLGGGGLVTNSAKEYSKCLYKLANYFLWPFGKMVYLLQDEQYLQEDKDEGISMQQFYNWVTSYSNRLVFHQSQAKFQQREDHPAPATESSSLMPPANTTATPLNSNHPSYNSIRHEIPHAAAQRRYFGRGKWSWGRVLFYTIFHLVLQPILAVLSLCLWLLVFTIPMSNVLWQIMYHCRRHPLALGFKYVENSSQSHENEITQQQLNKNILLCTFRAAGWHYYKYTVDGTNVIVVNLISIVFFTIFDFYVLKNFLHWKTWFTYESSIFILCLTSTIPLAFYIGQAVASISAQTSMGVGAVINAFFSTIVEIFLYCVALQQKKGLLVEGSMIGSILGAVLLLPGLSMCGGALNRKTQRYNPASAGVSSALLIFSMIVMFVPTVLYEIYGGYSVNCADGANDRDCTFSHPPLKFNRLFTHVIQPMSISCAIVLFCAYIIGLWFTLRTHAKMIWQLPIADPTSTAPEQQEQNSHDAPNWSRSKSTCILLMSTLLYAIIAEILVSCVDAVLEDIPSLNPKFLGLTIFALIPNTTEFLNAISFAIHGNVALSMEIGSAYALQVCLLQIPSLVIYSIFYTWNVKKSMINIRTQMFPLVFPRWDIFGAMTSVFMFTYLYAEGKSNYFKGSMLILLYIIIVVGFYFQGALSE.

The span at 1 to 15 (MAKNNHISASGNSTS) shows a compositional bias: polar residues. The segment at 1–20 (MAKNNHISASGNSTSGDHRL) is disordered. At 1–244 (MAKNNHISAS…WEVTCSNVLW (244 aa)) the chain is on the cytoplasmic side. At T26 the chain carries Phosphothreonine. S32 bears the Phosphoserine mark. T33 is modified (phosphothreonine). A disordered region spans residues 68–147 (NKSKRSVSSQ…DDEDANDDSR (80 aa)). The span at 73 to 87 (SVSSQSPIVHSSNNT) shows a compositional bias: low complexity. Residues 102–121 (ESLSSKSHSVPDLNTATPSS) show a composition bias toward polar residues. S110 carries the post-translational modification Phosphoserine. Residue T118 is modified to Phosphothreonine. S121 is modified (phosphoserine). A helical transmembrane segment spans residues 245–265 (FILFGFPIAILFYSAAIVVFL). Residues 266–408 (LGGGGLVTNS…GRVLFYTIFH (143 aa)) are Vacuolar-facing. N361 carries N-linked (GlcNAc...) asparagine glycosylation. The helical transmembrane segment at 409 to 429 (LVLQPILAVLSLCLWLLVFTI) threads the bilayer. Residues 430-494 (PMSNVLWQIM…HYYKYTVDGT (65 aa)) are Cytoplasmic-facing. A helical membrane pass occupies residues 495-515 (NVIVVNLISIVFFTIFDFYVL). Topologically, residues 516 to 530 (KNFLHWKTWFTYESS) are vacuolar. The chain crosses the membrane as a helical span at residues 531–551 (IFILCLTSTIPLAFYIGQAVA). Residues 552–560 (SISAQTSMG) are Cytoplasmic-facing. The helical transmembrane segment at 561–581 (VGAVINAFFSTIVEIFLYCVA) threads the bilayer. The Vacuolar portion of the chain corresponds to 582–587 (LQQKKG). Residues 588–608 (LLVEGSMIGSILGAVLLLPGL) form a helical membrane-spanning segment. At 609–626 (SMCGGALNRKTQRYNPAS) the chain is on the cytoplasmic side. Residues 627–647 (AGVSSALLIFSMIVMFVPTVL) form a helical membrane-spanning segment. Over 648 to 686 (YEIYGGYSVNCADGANDRDCTFSHPPLKFNRLFTHVIQP) the chain is Vacuolar. A helical membrane pass occupies residues 687-707 (MSISCAIVLFCAYIIGLWFTL). Residues 708-746 (RTHAKMIWQLPIADPTSTAPEQQEQNSHDAPNWSRSKST) lie on the Cytoplasmic side of the membrane. The chain crosses the membrane as a helical span at residues 747-767 (CILLMSTLLYAIIAEILVSCV). The Vacuolar segment spans residues 768 to 783 (DAVLEDIPSLNPKFLG). A helical membrane pass occupies residues 784–804 (LTIFALIPNTTEFLNAISFAI). Topologically, residues 805-816 (HGNVALSMEIGS) are cytoplasmic. Residues 817-837 (AYALQVCLLQIPSLVIYSIFY) traverse the membrane as a helical segment. The Vacuolar portion of the chain corresponds to 838–851 (TWNVKKSMINIRTQ). A helical transmembrane segment spans residues 852–872 (MFPLVFPRWDIFGAMTSVFMF). Over 873 to 885 (TYLYAEGKSNYFK) the chain is Cytoplasmic. Residues 886–906 (GSMLILLYIIIVVGFYFQGAL) traverse the membrane as a helical segment. At 907–908 (SE) the chain is on the vacuolar side.

Belongs to the Ca(2+):cation antiporter (CaCA) (TC 2.A.19) family.

Its subcellular location is the vacuole membrane. Functionally, has a role in promoting intracellular monovalent cation sequestration via the exchange of monovalent cations and especially Na(+) for hydrogen ions across the vacuolar membrane. This chain is Low affinity vacuolar monovalent cation/H(+) antiporter (VNX1), found in Saccharomyces cerevisiae (strain ATCC 204508 / S288c) (Baker's yeast).